Consider the following 552-residue polypeptide: Carboxypeptidase Y homolog A (552 aa).

The signal sequence occupies residues Met-1 to Thr-17. Residues Pro-18–Lys-133 constitute a propeptide that is removed on maturation. Intrachain disulfides connect Cys-188/Cys-428, Cys-322/Cys-336, Cys-346/Cys-369, Cys-353/Cys-362, and Cys-391/Cys-398. Asn-219 carries an N-linked (GlcNAc...) asparagine glycan. Ser-275 is an active-site residue. Asp-467 is an active-site residue. N-linked (GlcNAc...) asparagine glycosylation is present at Asn-518. His-529 is a catalytic residue.

This sequence belongs to the peptidase S10 family.

The protein localises to the vacuole. The enzyme catalyses Release of a C-terminal amino acid with broad specificity.. In terms of biological role, vacuolar carboxypeptidase involved in degradation of small peptides. Digests preferentially peptides containing an aliphatic or hydrophobic residue in P1' position, as well as methionine, leucine or phenylalanine in P1 position of ester substrate. In Emericella nidulans (strain FGSC A4 / ATCC 38163 / CBS 112.46 / NRRL 194 / M139) (Aspergillus nidulans), this protein is Carboxypeptidase Y homolog A (cpyA).